A 221-amino-acid chain; its full sequence is Ribosomal RNA small subunit methyltransferase G (221 aa).

Residues G89, L94, 140–141 (VE), and R154 each bind S-adenosyl-L-methionine.

This sequence belongs to the methyltransferase superfamily. RNA methyltransferase RsmG family.

It localises to the cytoplasm. The enzyme catalyses guanosine(527) in 16S rRNA + S-adenosyl-L-methionine = N(7)-methylguanosine(527) in 16S rRNA + S-adenosyl-L-homocysteine. In terms of biological role, specifically methylates the N7 position of guanine in position 527 of 16S rRNA. The protein is Ribosomal RNA small subunit methyltransferase G of Methylibium petroleiphilum (strain ATCC BAA-1232 / LMG 22953 / PM1).